The primary structure comprises 500 residues: Maturase K (500 aa).

It belongs to the intron maturase 2 family. MatK subfamily.

The protein resides in the plastid. The protein localises to the chloroplast. Its function is as follows. Usually encoded in the trnK tRNA gene intron. Probably assists in splicing its own and other chloroplast group II introns. In Brasenia schreberi (Water shield), this protein is Maturase K.